Reading from the N-terminus, the 498-residue chain is ATP synthase subunit beta, chloroplastic (498 aa).

Position 172–179 (172–179 (GGAGVGKT)) interacts with ATP.

This sequence belongs to the ATPase alpha/beta chains family. As to quaternary structure, F-type ATPases have 2 components, CF(1) - the catalytic core - and CF(0) - the membrane proton channel. CF(1) has five subunits: alpha(3), beta(3), gamma(1), delta(1), epsilon(1). CF(0) has four main subunits: a(1), b(1), b'(1) and c(9-12).

It localises to the plastid. Its subcellular location is the chloroplast thylakoid membrane. It catalyses the reaction ATP + H2O + 4 H(+)(in) = ADP + phosphate + 5 H(+)(out). Functionally, produces ATP from ADP in the presence of a proton gradient across the membrane. The catalytic sites are hosted primarily by the beta subunits. This chain is ATP synthase subunit beta, chloroplastic, found in Populus trichocarpa (Western balsam poplar).